The chain runs to 894 residues: Translation initiation factor IF-2 (894 aa).

A disordered region spans residues 25–304; sequence ADAGMNKASS…KPTSMQHGFD (280 aa). Composition is skewed to basic and acidic residues over residues 33 to 44, 52 to 62, 101 to 174, 184 to 239, and 247 to 263; these read SSDHVSDEEKQK, EHGDKSGESEP, STIE…KEMN, AKKE…ENSD, and YARE…EGGA. The segment covering 283 to 293 has biased composition (basic residues); that stretch reads RGGKGRNKGKL. Positions 393 to 562 constitute a tr-type G domain; sequence PRAPVVTIMG…LLQSEVLELT (170 aa). The interval 402-409 is G1; sequence GHVDHGKT. Residue 402 to 409 coordinates GTP; it reads GHVDHGKT. The segment at 427 to 431 is G2; that stretch reads GITQH. Positions 448–451 are G3; it reads DTPG. GTP-binding positions include 448 to 452 and 502 to 505; these read DTPGH and NKID. The segment at 502 to 505 is G4; it reads NKID. The tract at residues 538–540 is G5; sequence SAK.

The protein belongs to the TRAFAC class translation factor GTPase superfamily. Classic translation factor GTPase family. IF-2 subfamily.

It localises to the cytoplasm. Functionally, one of the essential components for the initiation of protein synthesis. Protects formylmethionyl-tRNA from spontaneous hydrolysis and promotes its binding to the 30S ribosomal subunits. Also involved in the hydrolysis of GTP during the formation of the 70S ribosomal complex. This Vibrio campbellii (strain ATCC BAA-1116) protein is Translation initiation factor IF-2.